The sequence spans 155 residues: Ribosomal RNA large subunit methyltransferase H (155 aa).

S-adenosyl-L-methionine is bound by residues Leu-73, Gly-104, and 123-128 (LSPLTL).

This sequence belongs to the RNA methyltransferase RlmH family. As to quaternary structure, homodimer.

Its subcellular location is the cytoplasm. The catalysed reaction is pseudouridine(1915) in 23S rRNA + S-adenosyl-L-methionine = N(3)-methylpseudouridine(1915) in 23S rRNA + S-adenosyl-L-homocysteine + H(+). Specifically methylates the pseudouridine at position 1915 (m3Psi1915) in 23S rRNA. In Stutzerimonas stutzeri (strain A1501) (Pseudomonas stutzeri), this protein is Ribosomal RNA large subunit methyltransferase H.